We begin with the raw amino-acid sequence, 286 residues long: General stress protein A (286 aa).

UDP contacts are provided by residues 12-17 (CADDNY) and 111-112 (DC). 3 residues coordinate Mn(2+): D111, D113, and H247. 247 to 253 (HFCGGEK) provides a ligand contact to UDP.

Belongs to the glycosyltransferase 8 family.

This is General stress protein A (gspA) from Bacillus subtilis (strain 168).